A 1285-amino-acid polypeptide reads, in one-letter code: Nuclear pore complex protein NUP133 (1285 aa).

2 disordered regions span residues 1–53 (MFSP…PAPW) and 522–580 (EPPE…QTAR). Residues 31-41 (TPATQNRNNFI) are compositionally biased toward polar residues. Basic and acidic residues-rich tracts occupy residues 523–544 (PPER…DETR) and 553–569 (TAGR…DKGN).

It belongs to the nucleoporin Nup133 family. As to quaternary structure, part of the nuclear pore complex (NPC). The NPC has an eight-fold symmetrical structure comprising a central transport channel and two rings, the cytoplasmic and nuclear rings, to which eight filaments are attached. The cytoplasmic filaments have loose ends, while the nuclear filaments are joined in a distal ring, forming a nuclear basket. NPCs are highly dynamic in configuration and composition, and can be devided in 3 subcomplexes, the NUP62 subcomplex, the NUP107-160 subcomplex and the NUP93 subcomplex, containing approximately 30 different nucleoporin proteins.

Its subcellular location is the nucleus envelope. The protein localises to the nucleus. It localises to the nuclear pore complex. The polypeptide is Nuclear pore complex protein NUP133 (Arabidopsis thaliana (Mouse-ear cress)).